The following is a 178-amino-acid chain: NADPH azoreductase (178 aa).

NADP(+) is bound at residue 106–111; the sequence is GGGKGG.

It belongs to the azoreductase type 2 family. In terms of assembly, monomer.

It catalyses the reaction N,N-dimethyl-1,4-phenylenediamine + aniline + 2 NADP(+) = 4-(dimethylamino)azobenzene + 2 NADPH + 2 H(+). Functionally, catalyzes the reductive cleavage of azo bond in aromatic azo compounds to the corresponding amines. Requires NADPH as an electron donor for its activity. Compounds with paired naphthalene groups coupled with the azo group are good substrates, with the following preference order: Rocceline &gt; Sumifix Black B &gt; Solar Orange. The protein is NADPH azoreductase (azr) of Bacillus sp. (strain OY1-2).